A 447-amino-acid polypeptide reads, in one-letter code: Dihydroorotase (447 aa).

Zn(2+)-binding residues include histidine 81 and histidine 83. Substrate is bound by residues 83–85 and asparagine 115; that span reads HFR. Aspartate 171, histidine 198, and histidine 252 together coordinate Zn(2+). Substrate is bound at residue asparagine 298. Aspartate 325 contacts Zn(2+). Aspartate 325 is a catalytic residue. Substrate contacts are provided by residues histidine 329 and 343–344; that span reads FG.

It belongs to the metallo-dependent hydrolases superfamily. DHOase family. Class I DHOase subfamily. It depends on Zn(2+) as a cofactor.

It catalyses the reaction (S)-dihydroorotate + H2O = N-carbamoyl-L-aspartate + H(+). It functions in the pathway pyrimidine metabolism; UMP biosynthesis via de novo pathway; (S)-dihydroorotate from bicarbonate: step 3/3. Catalyzes the reversible cyclization of carbamoyl aspartate to dihydroorotate. The chain is Dihydroorotase from Ehrlichia canis (strain Jake).